Reading from the N-terminus, the 344-residue chain is L-rhamnose-proton symporter (344 aa).

The next 10 membrane-spanning stretches (helical) occupy residues 5–25 (ILLGIFWHFVGATSAACFYAP), 38–58 (WAIAGIFSWILLPWGISYWLL), 72–92 (ILLPVFLFGAMWGIGNIGYGL), 101–121 (MGIGIAIGITLIVGTLMTPII), 137–157 (TLIGVVIAVVGVAVVSYAGLL), 175–195 (LALAVMCGIFSAGMSFAMSAA), 214–234 (LPSYVVIMGGGAIINLGFCII), 259–279 (ILFSALGGIMWYFQFFFYAWG), 289–309 (FMSWMLHMSFYVLCGGIVGLL), and 323–343 (VLCIGCLIIVLAANIVGLGMA).

This sequence belongs to the L-rhamnose transporter (TC 2.A.7.6) family.

It is found in the cell inner membrane. It catalyses the reaction L-rhamnopyranose(in) + H(+)(in) = L-rhamnopyranose(out) + H(+)(out). Its function is as follows. Uptake of L-rhamnose across the cytoplasmic membrane with the concomitant transport of protons into the cell (symport system). The sequence is that of L-rhamnose-proton symporter from Mannheimia succiniciproducens (strain KCTC 0769BP / MBEL55E).